A 353-amino-acid polypeptide reads, in one-letter code: tRNA N6-adenosine threonylcarbamoyltransferase (353 aa).

Histidine 109 and histidine 113 together coordinate Fe cation. Substrate is bound by residues 136–140 (TVSGG), aspartate 169, glycine 182, aspartate 186, and asparagine 284. Aspartate 312 is a Fe cation binding site.

The protein belongs to the KAE1 / TsaD family. Requires Fe(2+) as cofactor.

Its subcellular location is the cytoplasm. It carries out the reaction L-threonylcarbamoyladenylate + adenosine(37) in tRNA = N(6)-L-threonylcarbamoyladenosine(37) in tRNA + AMP + H(+). Its function is as follows. Required for the formation of a threonylcarbamoyl group on adenosine at position 37 (t(6)A37) in tRNAs that read codons beginning with adenine. Is involved in the transfer of the threonylcarbamoyl moiety of threonylcarbamoyl-AMP (TC-AMP) to the N6 group of A37, together with TsaE and TsaB. TsaD likely plays a direct catalytic role in this reaction. This chain is tRNA N6-adenosine threonylcarbamoyltransferase, found in Chlorobium limicola (strain DSM 245 / NBRC 103803 / 6330).